A 480-amino-acid chain; its full sequence is ATP synthase subunit beta (480 aa).

Residue 154-161 (GGAGVGKT) participates in ATP binding.

Belongs to the ATPase alpha/beta chains family. As to quaternary structure, F-type ATPases have 2 components, CF(1) - the catalytic core - and CF(0) - the membrane proton channel. CF(1) has five subunits: alpha(3), beta(3), gamma(1), delta(1), epsilon(1). CF(0) has four main subunits: a(1), b(1), b'(1) and c(9-12).

The protein resides in the cell inner membrane. It carries out the reaction ATP + H2O + 4 H(+)(in) = ADP + phosphate + 5 H(+)(out). Produces ATP from ADP in the presence of a proton gradient across the membrane. The catalytic sites are hosted primarily by the beta subunits. The polypeptide is ATP synthase subunit beta (Bradyrhizobium sp. (strain ORS 278)).